Here is an 86-residue protein sequence, read N- to C-terminus: Large ribosomal subunit protein bL31 (86 aa).

A disordered region spans residues 64-86; sequence KYGMGSANSSESKDQKEEKDSKK. Over residues 74–86 the composition is skewed to basic and acidic residues; the sequence is ESKDQKEEKDSKK.

Belongs to the bacterial ribosomal protein bL31 family. Type A subfamily. In terms of assembly, part of the 50S ribosomal subunit.

In terms of biological role, binds the 23S rRNA. The chain is Large ribosomal subunit protein bL31 from Prochlorococcus marinus (strain MIT 9301).